We begin with the raw amino-acid sequence, 206 residues long: ATP phosphoribosyltransferase (206 aa).

Belongs to the ATP phosphoribosyltransferase family. Short subfamily. In terms of assembly, heteromultimer composed of HisG and HisZ subunits.

It localises to the cytoplasm. It carries out the reaction 1-(5-phospho-beta-D-ribosyl)-ATP + diphosphate = 5-phospho-alpha-D-ribose 1-diphosphate + ATP. Its pathway is amino-acid biosynthesis; L-histidine biosynthesis; L-histidine from 5-phospho-alpha-D-ribose 1-diphosphate: step 1/9. Its function is as follows. Catalyzes the condensation of ATP and 5-phosphoribose 1-diphosphate to form N'-(5'-phosphoribosyl)-ATP (PR-ATP). Has a crucial role in the pathway because the rate of histidine biosynthesis seems to be controlled primarily by regulation of HisG enzymatic activity. The polypeptide is ATP phosphoribosyltransferase (Sulfurovum sp. (strain NBC37-1)).